Reading from the N-terminus, the 86-residue chain is Large ribosomal subunit protein bL31B (86 aa).

It belongs to the bacterial ribosomal protein bL31 family. Type B subfamily. Part of the 50S ribosomal subunit.

This Vibrio vulnificus (strain CMCP6) protein is Large ribosomal subunit protein bL31B.